The sequence spans 228 residues: MSQMPIELKGSSFTLSVVHLHDSQPEVIYQALQEKIEQAPAFLKNAPVVINVAALTAETDWIKLQQAISSTGLHVVGVSGCTDDALKKIIAQAGLPLLSEGKAQRRVVEPVAAVPAAVKTQIIDTPVRSGQQIYARNCDLIVTSNVSAGAEVIADGNIHIYGMMRGRALAGVSGDVQSQIFCTHLAAELVSIAGRYWLSDQVPEAYFGQPARINLNQLDNVLTIKPLD.

Belongs to the MinC family. In terms of assembly, interacts with MinD and FtsZ.

In terms of biological role, cell division inhibitor that blocks the formation of polar Z ring septums. Rapidly oscillates between the poles of the cell to destabilize FtsZ filaments that have formed before they mature into polar Z rings. Prevents FtsZ polymerization. In Pectobacterium atrosepticum (strain SCRI 1043 / ATCC BAA-672) (Erwinia carotovora subsp. atroseptica), this protein is Probable septum site-determining protein MinC.